Consider the following 747-residue polypeptide: Probable copper-transporting ATPase PacS (747 aa).

The Cytoplasmic portion of the chain corresponds to 1 to 101; the sequence is MVNQQTLTLR…RQLAQRVWVS (101 aa). Residues 3–69 form the HMA domain; that stretch reads NQQTLTLRGM…AIEAAGYHAF (67 aa). The a metal cation site is built by Cys14 and Cys17. A helical membrane pass occupies residues 102 to 122; sequence GLIASLLVIGSLPMMLGISIP. Over 123–132 the chain is Extracellular; it reads GIPMWLHHPG. The helical transmembrane segment at 133–151 threads the bilayer; it reads LQLGLTLPVLWAGRSFFIN. Residues 152–158 are Cytoplasmic-facing; the sequence is AWKAFRQ. Residues 159-179 traverse the membrane as a helical segment; that stretch reads NTATMDTLVAVGTGAAFLYSL. Topologically, residues 180 to 199 are extracellular; it reads AVTLFPQWLTRQGLPPDVYY. Residues 200–220 form a helical membrane-spanning segment; the sequence is EAIAVIIALLLLGRSLEERAK. Residues 221-348 lie on the Cytoplasmic side of the membrane; that stretch reads GQTSAAIRQL…KAPIQRLADQ (128 aa). Residues 349–371 form a helical membrane-spanning segment; it reads VTGWFVPAVIAIAILTFVLWFNW. Residues 372-378 lie on the Extracellular side of the membrane; it reads IGNVTLA. The helical transmembrane segment at 379–396 threads the bilayer; sequence LITAVGVLIIACPCALGL. Over 397-688 the chain is Cytoplasmic; the sequence is ATPTSIMVGT…QLSRATMTNI (292 aa). Asp434 acts as the 4-aspartylphosphate intermediate in catalysis. The Mg(2+) site is built by Asp634 and Asp638. A helical membrane pass occupies residues 689–708; sequence RQNLFFAFIYNVAGIPIAAG. Residues 709 to 720 are Extracellular-facing; that stretch reads ILYPLLGWLLSP. The chain crosses the membrane as a helical span at residues 721–739; the sequence is MLAGAAMAFSSVSVVTNAL. Residues 740–747 lie on the Cytoplasmic side of the membrane; that stretch reads RLRQFQPR.

This sequence belongs to the cation transport ATPase (P-type) (TC 3.A.3) family. Type IB subfamily.

Its subcellular location is the cell membrane. It catalyses the reaction Cu(+)(in) + ATP + H2O = Cu(+)(out) + ADP + phosphate + H(+). In terms of biological role, may play a role in the osmotic adaptation. The chain is Probable copper-transporting ATPase PacS (pacS) from Synechococcus elongatus (strain ATCC 33912 / PCC 7942 / FACHB-805) (Anacystis nidulans R2).